A 615-amino-acid chain; its full sequence is ABC transporter G family member 22 (615 aa).

Residues 31-279 enclose the ABC transporter domain; it reads ITFKDLAYSV…EIGFPFPDQT (249 aa). 67 to 74 is an ATP binding site; it reads GPSGSGKT. The ABC transmembrane type-2 domain occupies 364–610; it reads SNCLVRFAVA…TMVFLCLHYF (247 aa). 6 consecutive transmembrane segments (helical) span residues 370–390, 400–420, 442–462, 477–497, 508–528, and 587–607; these read FAVA…LGMD, VLFY…SLFI, LALM…LGTI, FFAM…MLII, FAVG…FVPI, and INLI…FLCL.

Belongs to the ABC transporter superfamily. ABCG family. Eye pigment precursor importer (TC 3.A.1.204) subfamily.

It localises to the membrane. Functionally, may be involved in cell migration. The protein is ABC transporter G family member 22 (abcG22) of Dictyostelium discoideum (Social amoeba).